A 307-amino-acid chain; its full sequence is Elongation factor Ts (307 aa).

Positions 80–83 are involved in Mg(2+) ion dislocation from EF-Tu; sequence TDFV.

It belongs to the EF-Ts family.

The protein resides in the cytoplasm. Its function is as follows. Associates with the EF-Tu.GDP complex and induces the exchange of GDP to GTP. It remains bound to the aminoacyl-tRNA.EF-Tu.GTP complex up to the GTP hydrolysis stage on the ribosome. This is Elongation factor Ts from Bradyrhizobium diazoefficiens (strain JCM 10833 / BCRC 13528 / IAM 13628 / NBRC 14792 / USDA 110).